A 129-amino-acid chain; its full sequence is Phosphoribosyl-AMP cyclohydrolase (129 aa).

Asp-76 contributes to the Mg(2+) binding site. A Zn(2+)-binding site is contributed by Cys-77. Mg(2+) is bound by residues Asp-78 and Asp-80. Zn(2+)-binding residues include Cys-97 and Cys-104.

This sequence belongs to the PRA-CH family. In terms of assembly, homodimer. It depends on Mg(2+) as a cofactor. Requires Zn(2+) as cofactor.

The protein localises to the cytoplasm. The enzyme catalyses 1-(5-phospho-beta-D-ribosyl)-5'-AMP + H2O = 1-(5-phospho-beta-D-ribosyl)-5-[(5-phospho-beta-D-ribosylamino)methylideneamino]imidazole-4-carboxamide. It functions in the pathway amino-acid biosynthesis; L-histidine biosynthesis; L-histidine from 5-phospho-alpha-D-ribose 1-diphosphate: step 3/9. Its function is as follows. Catalyzes the hydrolysis of the adenine ring of phosphoribosyl-AMP. This chain is Phosphoribosyl-AMP cyclohydrolase, found in Methylibium petroleiphilum (strain ATCC BAA-1232 / LMG 22953 / PM1).